We begin with the raw amino-acid sequence, 420 residues long: Glutamate-1-semialdehyde 2,1-aminomutase (420 aa).

Lys-261 carries the N6-(pyridoxal phosphate)lysine modification.

This sequence belongs to the class-III pyridoxal-phosphate-dependent aminotransferase family. HemL subfamily. It depends on pyridoxal 5'-phosphate as a cofactor.

It localises to the cytoplasm. The enzyme catalyses (S)-4-amino-5-oxopentanoate = 5-aminolevulinate. The protein operates within porphyrin-containing compound metabolism; protoporphyrin-IX biosynthesis; 5-aminolevulinate from L-glutamyl-tRNA(Glu): step 2/2. The chain is Glutamate-1-semialdehyde 2,1-aminomutase from Thermoplasma volcanium (strain ATCC 51530 / DSM 4299 / JCM 9571 / NBRC 15438 / GSS1).